A 142-amino-acid chain; its full sequence is Phosphoribosyl-AMP cyclohydrolase (142 aa).

Aspartate 92 lines the Mg(2+) pocket. Cysteine 93 lines the Zn(2+) pocket. Positions 94 and 96 each coordinate Mg(2+). Residues cysteine 109 and cysteine 116 each coordinate Zn(2+).

The protein belongs to the PRA-CH family. As to quaternary structure, homodimer. Requires Mg(2+) as cofactor. The cofactor is Zn(2+).

It localises to the cytoplasm. The catalysed reaction is 1-(5-phospho-beta-D-ribosyl)-5'-AMP + H2O = 1-(5-phospho-beta-D-ribosyl)-5-[(5-phospho-beta-D-ribosylamino)methylideneamino]imidazole-4-carboxamide. It participates in amino-acid biosynthesis; L-histidine biosynthesis; L-histidine from 5-phospho-alpha-D-ribose 1-diphosphate: step 3/9. In terms of biological role, catalyzes the hydrolysis of the adenine ring of phosphoribosyl-AMP. The chain is Phosphoribosyl-AMP cyclohydrolase from Halorhodospira halophila (strain DSM 244 / SL1) (Ectothiorhodospira halophila (strain DSM 244 / SL1)).